The sequence spans 415 residues: Probable tRNA pseudouridine synthase D (415 aa).

Aspartate 83 acts as the Nucleophile in catalysis. Positions 158 to 378 (GFPNYFGYQR…PGRRRELLIR (221 aa)) constitute a TRUD domain.

The protein belongs to the pseudouridine synthase TruD family.

The catalysed reaction is uridine(13) in tRNA = pseudouridine(13) in tRNA. Its function is as follows. Could be responsible for synthesis of pseudouridine from uracil-13 in transfer RNAs. The polypeptide is Probable tRNA pseudouridine synthase D (Thermococcus gammatolerans (strain DSM 15229 / JCM 11827 / EJ3)).